A 462-amino-acid polypeptide reads, in one-letter code: Glutamate--tRNA ligase 2 (462 aa).

The 'HIGH' region signature appears at 8-18; the sequence is PSPTGYLHIGG. The 'KMSKS' region motif lies at 236–240; the sequence is KLSKR. Residue Lys-239 participates in ATP binding.

It belongs to the class-I aminoacyl-tRNA synthetase family. Glutamate--tRNA ligase type 1 subfamily. Monomer.

It localises to the cytoplasm. The enzyme catalyses tRNA(Glu) + L-glutamate + ATP = L-glutamyl-tRNA(Glu) + AMP + diphosphate. Its function is as follows. Catalyzes the attachment of glutamate to tRNA(Glu) in a two-step reaction: glutamate is first activated by ATP to form Glu-AMP and then transferred to the acceptor end of tRNA(Glu). The sequence is that of Glutamate--tRNA ligase 2 from Nitratiruptor sp. (strain SB155-2).